The sequence spans 98 residues: Integration host factor subunit alpha (98 aa).

The protein belongs to the bacterial histone-like protein family. As to quaternary structure, heterodimer of an alpha and a beta chain.

This protein is one of the two subunits of integration host factor, a specific DNA-binding protein that functions in genetic recombination as well as in transcriptional and translational control. This chain is Integration host factor subunit alpha, found in Mannheimia succiniciproducens (strain KCTC 0769BP / MBEL55E).